The sequence spans 99 residues: Large ribosomal subunit protein bL27 (99 aa).

The tract at residues Met-1 to Leu-21 is disordered.

Belongs to the bacterial ribosomal protein bL27 family.

This is Large ribosomal subunit protein bL27 from Thermomicrobium roseum (strain ATCC 27502 / DSM 5159 / P-2).